Consider the following 119-residue polypeptide: uncharacterized protein (119 aa).

Residues Leu30–Leu50 traverse the membrane as a helical segment.

It localises to the membrane. This is an uncharacterized protein from Saccharomyces cerevisiae (strain ATCC 204508 / S288c) (Baker's yeast).